Here is a 630-residue protein sequence, read N- to C-terminus: Pentatricopeptide repeat-containing protein At1g63130, mitochondrial (630 aa).

Residues 1 to 22 (MRRLFAISSTGNRFVHRSLLGK) constitute a mitochondrion transit peptide. 15 PPR repeats span residues 80 to 114 (SIVE…GISH), 115 to 149 (NLYT…GYEP), 150 to 184 (DIVT…GYQP), 185 to 219 (DSFT…GCQP), 220 to 254 (DLVT…KIEP), 255 to 289 (GVVI…GIRP), 290 to 324 (NVVT…KINP), 325 to 359 (NVVT…SIDP), 360 to 394 (DIFT…DCFP), 395 to 429 (NVVT…GLVG), 430 to 464 (NTVT…GVLP), 465 to 499 (DIMT…KMEP), 500 to 534 (DIYT…GVKP), 535 to 569 (NVVT…GPLP), and 570 to 604 (DSGT…RFVG).

This sequence belongs to the PPR family. P subfamily.

Its subcellular location is the mitochondrion. This chain is Pentatricopeptide repeat-containing protein At1g63130, mitochondrial, found in Arabidopsis thaliana (Mouse-ear cress).